The following is a 281-amino-acid chain: NADPH-dependent 7-cyano-7-deazaguanine reductase (281 aa).

87–89 (VES) serves as a coordination point for substrate. 89–90 (SK) provides a ligand contact to NADPH. The Thioimide intermediate role is filled by Cys-188. Asp-195 acts as the Proton donor in catalysis. 227-228 (HE) is a binding site for substrate. 256-257 (RG) is an NADPH binding site.

The protein belongs to the GTP cyclohydrolase I family. QueF type 2 subfamily. As to quaternary structure, homodimer.

The protein resides in the cytoplasm. The enzyme catalyses 7-aminomethyl-7-carbaguanine + 2 NADP(+) = 7-cyano-7-deazaguanine + 2 NADPH + 3 H(+). Its pathway is tRNA modification; tRNA-queuosine biosynthesis. In terms of biological role, catalyzes the NADPH-dependent reduction of 7-cyano-7-deazaguanine (preQ0) to 7-aminomethyl-7-deazaguanine (preQ1). This is NADPH-dependent 7-cyano-7-deazaguanine reductase from Aliivibrio fischeri (strain MJ11) (Vibrio fischeri).